The sequence spans 294 residues: 4-hydroxy-tetrahydrodipicolinate synthase (294 aa).

T48 provides a ligand contact to pyruvate. Y136 serves as the catalytic Proton donor/acceptor. K164 functions as the Schiff-base intermediate with substrate in the catalytic mechanism. A pyruvate-binding site is contributed by I206.

This sequence belongs to the DapA family. Homotetramer; dimer of dimers.

The protein resides in the cytoplasm. It catalyses the reaction L-aspartate 4-semialdehyde + pyruvate = (2S,4S)-4-hydroxy-2,3,4,5-tetrahydrodipicolinate + H2O + H(+). The protein operates within amino-acid biosynthesis; L-lysine biosynthesis via DAP pathway; (S)-tetrahydrodipicolinate from L-aspartate: step 3/4. Catalyzes the condensation of (S)-aspartate-beta-semialdehyde [(S)-ASA] and pyruvate to 4-hydroxy-tetrahydrodipicolinate (HTPA). This is 4-hydroxy-tetrahydrodipicolinate synthase from Phenylobacterium zucineum (strain HLK1).